A 642-amino-acid chain; its full sequence is Chaperone protein DnaK (642 aa).

Residue threonine 200 is modified to Phosphothreonine; by autocatalysis. Over residues 603–623 the composition is skewed to low complexity; it reads AAAAEQGGNADAASGNAQASK. The segment at 603-627 is disordered; sequence AAAAEQGGNADAASGNAQASKAADD.

It belongs to the heat shock protein 70 family.

Acts as a chaperone. This is Chaperone protein DnaK from Xanthomonas campestris pv. campestris (strain B100).